A 110-amino-acid polypeptide reads, in one-letter code: MSVKLKYDKIDQRNGDDSGGNHNNCGNGNNVTIVIKIQPQQQQQLINERQQQHQQQQQLINERQLLQQQIQLIKQQPQQQQPMNHTTPPSPHHLRFESPNDVPYIVIKAV.

Basic and acidic residues predominate over residues 1-16; that stretch reads MSVKLKYDKIDQRNGD. Disordered regions lie at residues 1 to 29 and 73 to 100; these read MSVK…GNGN and IKQQ…ESPN. The segment covering 20–29 has biased composition (low complexity); sequence GNHNNCGNGN.

This is an uncharacterized protein from Dictyostelium discoideum (Social amoeba).